The primary structure comprises 274 residues: Penicillin-insensitive murein endopeptidase (274 aa).

A signal peptide spans 1 to 19; sequence MNKTAIALLALLASSASLA. Disulfide bonds link cysteine 44–cysteine 265, cysteine 187–cysteine 235, and cysteine 216–cysteine 223. Zn(2+) is bound by residues histidine 110, histidine 113, aspartate 120, aspartate 147, histidine 150, and histidine 211. Positions 227 to 274 are disordered; it reads PLPPPGDGCGAELQSWFEPPKPGTTKPEKKTPPPLPPSCQALLDEHVI.

It belongs to the peptidase M74 family. Dimer. It depends on Zn(2+) as a cofactor.

Its subcellular location is the periplasm. Its function is as follows. Murein endopeptidase that cleaves the D-alanyl-meso-2,6-diamino-pimelyl amide bond that connects peptidoglycan strands. Likely plays a role in the removal of murein from the sacculus. In Escherichia coli O9:H4 (strain HS), this protein is Penicillin-insensitive murein endopeptidase.